The following is an 80-amino-acid chain: uncharacterized protein (80 aa).

Functionally, essential for virus function. This is an uncharacterized protein from Sulfolobus spindle-shape virus 1 (SSV1).